An 83-amino-acid polypeptide reads, in one-letter code: Short neurotoxin 1 (83 aa).

A signal peptide spans 1-21 (MKTLLLTLVVVTIVCLDLGYT). 4 disulfide bridges follow: cysteine 24-cysteine 45, cysteine 38-cysteine 62, cysteine 64-cysteine 75, and cysteine 76-cysteine 81.

This sequence belongs to the three-finger toxin family. Short-chain subfamily. Type I alpha-neurotoxin sub-subfamily. In terms of tissue distribution, expressed by the venom gland.

Its subcellular location is the secreted. Its function is as follows. Binds to muscle nicotinic acetylcholine receptor (nAChR) and inhibit acetylcholine from binding to the receptor, thereby impairing neuromuscular transmission. In Pseudechis australis (Mulga snake), this protein is Short neurotoxin 1.